The primary structure comprises 582 residues: PX domain-containing protein kinase-like protein (582 aa).

Residues 14–126 (LDDTVPLTAA…KFLDPNNYSA (113 aa)) enclose the PX domain. In terms of domain architecture, Protein kinase spans 88–481 (FIAERQRGLQ…VENSEEQPVK (394 aa)). The tract at residues 433–550 (EQKQIHQHRR…APFLPQPVNG (118 aa)) is disordered. Composition is skewed to basic residues over residues 437 to 448 (IHQHRRLTRAQS) and 457 to 469 (KRRKILARKKSKR). Positions 483 to 514 (SNSNNSAGSGASSPLTSPSSPTPPSTAGLSSA) are enriched in low complexity. Residues 515 to 531 (LPPPPPPPPPPPPPAGP) are compositionally biased toward pro residues. One can recognise a WH2 domain in the interval 548–567 (VNGVNRGALLSSIQNFQKGT).

It belongs to the protein kinase superfamily. Isoform 1 is present in all tissues examined. Isoform 2 is found in all tissues except skeletal muscle and very low levels in spleen. Both isoforms are widely expressed throughout the nervous system however levels of isoform 2 are higher in purified hippocampal and cortical neurons whereas glial cells express more isoform 1 than isoform 2.

Its subcellular location is the cytoplasm. It localises to the cell membrane. Functionally, binds to and modulates brain Na,K-ATPase subunits ATP1B1 and ATP1B3 and may thereby participate in the regulation of electrical excitability and synaptic transmission. May not display kinase activity. The chain is PX domain-containing protein kinase-like protein from Mus musculus (Mouse).